The following is a 173-amino-acid chain: Zinc finger A20 and AN1 domain-containing stress-associated protein 2 (173 aa).

The segment at P12–E46 adopts an A20-type zinc-finger fold. The Zn(2+) site is built by C18, C22, C34, C37, C114, C117, C128, C130, C135, H138, H144, and C146. Residues P108–A154 form an AN1-type zinc finger.

Its function is as follows. May be involved in environmental stress response. This chain is Zinc finger A20 and AN1 domain-containing stress-associated protein 2 (SAP2), found in Arabidopsis thaliana (Mouse-ear cress).